Reading from the N-terminus, the 590-residue chain is Glutamine--fructose-6-phosphate aminotransferase [isomerizing] (590 aa).

The Nucleophile; for GATase activity role is filled by C2. The 220-residue stretch at 2-221 folds into the Glutamine amidotransferase type-2 domain; the sequence is CGIIGIVSSK…DGELGFITTS (220 aa). SIS domains lie at 286–422 and 445–580; these read IIAE…DNTN and IGEE…PDKP. K585 functions as the For Fru-6P isomerization activity in the catalytic mechanism.

As to quaternary structure, homodimer.

Its subcellular location is the cytoplasm. It carries out the reaction D-fructose 6-phosphate + L-glutamine = D-glucosamine 6-phosphate + L-glutamate. In terms of biological role, catalyzes the first step in hexosamine metabolism, converting fructose-6P into glucosamine-6P using glutamine as a nitrogen source. The chain is Glutamine--fructose-6-phosphate aminotransferase [isomerizing] from Sulfolobus acidocaldarius (strain ATCC 33909 / DSM 639 / JCM 8929 / NBRC 15157 / NCIMB 11770).